Consider the following 90-residue polypeptide: Small ribosomal subunit protein uS17 (90 aa).

This sequence belongs to the universal ribosomal protein uS17 family. In terms of assembly, part of the 30S ribosomal subunit.

Functionally, one of the primary rRNA binding proteins, it binds specifically to the 5'-end of 16S ribosomal RNA. The chain is Small ribosomal subunit protein uS17 from Burkholderia ambifaria (strain ATCC BAA-244 / DSM 16087 / CCUG 44356 / LMG 19182 / AMMD) (Burkholderia cepacia (strain AMMD)).